The following is a 181-amino-acid chain: Translationally-controlled tumor protein homolog (181 aa).

One can recognise a TCTP domain in the interval 1-181 (MLIYKDIFTD…VKEAIIEEKC (181 aa)).

Belongs to the TCTP family.

It localises to the cytoplasm. Functionally, involved in calcium binding and microtubule stabilization. The sequence is that of Translationally-controlled tumor protein homolog (tct-1) from Caenorhabditis elegans.